The primary structure comprises 305 residues: Acyl transferase (305 aa).

Catalysis depends on charge relay system residues serine 114, aspartate 211, and histidine 241.

Belongs to the LuxD family.

The protein operates within lipid metabolism; fatty acid reduction for biolumincescence. In terms of biological role, acyl transferase is part of the fatty acid reductase system required for aldehyde biosynthesis; it produces fatty acids for the luminescent reaction. The sequence is that of Acyl transferase from Vibrio campbellii (strain ATCC BAA-1116).